A 194-amino-acid polypeptide reads, in one-letter code: Fe/S biogenesis protein NfuA (194 aa).

2 residues coordinate [4Fe-4S] cluster: cysteine 151 and cysteine 154.

The protein belongs to the NfuA family. In terms of assembly, homodimer. It depends on [4Fe-4S] cluster as a cofactor.

Its function is as follows. Involved in iron-sulfur cluster biogenesis. Binds a 4Fe-4S cluster, can transfer this cluster to apoproteins, and thereby intervenes in the maturation of Fe/S proteins. Could also act as a scaffold/chaperone for damaged Fe/S proteins. In Vibrio vulnificus (strain CMCP6), this protein is Fe/S biogenesis protein NfuA.